Reading from the N-terminus, the 101-residue chain is DNA-binding protein Fis (101 aa).

Residues 77–96 (QTRAANMLGINRGTLRKKLK) constitute a DNA-binding region (H-T-H motif).

Belongs to the transcriptional regulatory Fis family. In terms of assembly, homodimer.

Its function is as follows. Activates ribosomal RNA transcription. Plays a direct role in upstream activation of rRNA promoters. The protein is DNA-binding protein Fis of Shewanella sediminis (strain HAW-EB3).